We begin with the raw amino-acid sequence, 683 residues long: Rhophilin-2-B (683 aa).

Positions 25–99 (KSIAQTGRSK…LERLNISVEV (75 aa)) constitute an REM-1 domain. Residues 110–501 (PLIPLGLKET…TDIFQRLGPL (392 aa)) form the BRO1 domain. The PDZ domain occupies 515 to 592 (KMCITKEDGD…DSIEIQVISI (78 aa)).

This sequence belongs to the RHPN family. Interacts with RhoA.

The protein resides in the cytoplasm. Its subcellular location is the perinuclear region. Binds specifically to GTP-Rho. In Xenopus laevis (African clawed frog), this protein is Rhophilin-2-B (rhpn2-b).